The sequence spans 128 residues: Small ribosomal subunit protein uS9 (128 aa).

The protein belongs to the universal ribosomal protein uS9 family.

This Flavobacterium psychrophilum (strain ATCC 49511 / DSM 21280 / CIP 103535 / JIP02/86) protein is Small ribosomal subunit protein uS9.